Consider the following 281-residue polypeptide: ATP synthase gamma chain (281 aa).

Belongs to the ATPase gamma chain family. In terms of assembly, F-type ATPases have 2 components, CF(1) - the catalytic core - and CF(0) - the membrane proton channel. CF(1) has five subunits: alpha(3), beta(3), gamma(1), delta(1), epsilon(1). CF(0) has three main subunits: a, b and c.

It localises to the cell membrane. In terms of biological role, produces ATP from ADP in the presence of a proton gradient across the membrane. The gamma chain is believed to be important in regulating ATPase activity and the flow of protons through the CF(0) complex. The sequence is that of ATP synthase gamma chain from Desulfitobacterium hafniense (strain DSM 10664 / DCB-2).